Reading from the N-terminus, the 87-residue chain is Glutaredoxin (87 aa).

Residues 1–87 (MFKVYGYDSN…GFDQLREYFK (87 aa)) enclose the Glutaredoxin domain. Cysteines 14 and 17 form a disulfide.

The protein belongs to the glutaredoxin family.

Serves as a reducing agent for the phage-induced ribonucleotide reductase, but not for the bacterial ones. This specificity may be the result of sequence differences around the redox-active disulfide bond. The oxidized form accepts electrons from bacterial glutathione and will, in turn, reduce other small disulfides. Can also be reduced by NADPH and by bacterial thioredoxin reductase. The protein is Glutaredoxin (NRDC) of Enterobacteria phage T4 (Bacteriophage T4).